The primary structure comprises 107 residues: U1-lycotoxin-Ls1n (107 aa).

The signal sequence occupies residues 1–20 (MMKVLVVVALLVTLISYSSS). A propeptide spanning residues 21 to 41 (EGIDDLEADELLSLMANEQTR) is cleaved from the precursor. Disulfide bonds link cysteine 44–cysteine 59, cysteine 51–cysteine 68, cysteine 58–cysteine 86, and cysteine 70–cysteine 84.

This sequence belongs to the neurotoxin 19 (CSTX) family. 04 (U1-Lctx) subfamily. In terms of tissue distribution, expressed by the venom gland.

Its subcellular location is the secreted. The polypeptide is U1-lycotoxin-Ls1n (Lycosa singoriensis (Wolf spider)).